A 175-amino-acid chain; its full sequence is Translation initiation factor IF-3 (175 aa).

This sequence belongs to the IF-3 family. As to quaternary structure, monomer.

The protein localises to the cytoplasm. Its function is as follows. IF-3 binds to the 30S ribosomal subunit and shifts the equilibrium between 70S ribosomes and their 50S and 30S subunits in favor of the free subunits, thus enhancing the availability of 30S subunits on which protein synthesis initiation begins. The chain is Translation initiation factor IF-3 from Staphylococcus saprophyticus subsp. saprophyticus (strain ATCC 15305 / DSM 20229 / NCIMB 8711 / NCTC 7292 / S-41).